Consider the following 140-residue polypeptide: MNRLDHIGIAVFSIKDARSFYENVLGLAFLHQETVEEQKVNVAFFQAGSVKLELIEPLTADSPVHLFLEKKGQGLHHIAFLCNCLSEQLQALSDQHVQLIDRFPRQGANGKKIAFISPRETNGVLVELCEPKGDQHNEHE.

Residues 3–131 enclose the VOC domain; the sequence is RLDHIGIAVF…NGVLVELCEP (129 aa). Positions 6, 53, 77, and 127 each coordinate a divalent metal cation.

This sequence belongs to the methylmalonyl-CoA epimerase family.

This is an uncharacterized protein from Bacillus subtilis (strain 168).